The chain runs to 157 residues: Crossover junction endodeoxyribonuclease RuvC (157 aa).

Active-site residues include aspartate 7, glutamate 67, and aspartate 140. Positions 7, 67, and 140 each coordinate Mg(2+).

Belongs to the RuvC family. As to quaternary structure, homodimer which binds Holliday junction (HJ) DNA. The HJ becomes 2-fold symmetrical on binding to RuvC with unstacked arms; it has a different conformation from HJ DNA in complex with RuvA. In the full resolvosome a probable DNA-RuvA(4)-RuvB(12)-RuvC(2) complex forms which resolves the HJ. Mg(2+) serves as cofactor.

It is found in the cytoplasm. It carries out the reaction Endonucleolytic cleavage at a junction such as a reciprocal single-stranded crossover between two homologous DNA duplexes (Holliday junction).. Its function is as follows. The RuvA-RuvB-RuvC complex processes Holliday junction (HJ) DNA during genetic recombination and DNA repair. Endonuclease that resolves HJ intermediates. Cleaves cruciform DNA by making single-stranded nicks across the HJ at symmetrical positions within the homologous arms, yielding a 5'-phosphate and a 3'-hydroxyl group; requires a central core of homology in the junction. The consensus cleavage sequence is 5'-(A/T)TT(C/G)-3'. Cleavage occurs on the 3'-side of the TT dinucleotide at the point of strand exchange. HJ branch migration catalyzed by RuvA-RuvB allows RuvC to scan DNA until it finds its consensus sequence, where it cleaves and resolves the cruciform DNA. The protein is Crossover junction endodeoxyribonuclease RuvC of Rickettsia akari (strain Hartford).